The primary structure comprises 827 residues: Protein Jade-1 (827 aa).

The segment at 1 to 35 (MKRVCLPSSSEDSDDNGSLSTSWSQHSRSLPSFRH) is disordered. Residues 16-30 (NGSLSTSWSQHSRSL) show a composition bias toward polar residues. Residues 200–250 (DVVCDVCQSPDGEDGNEMVFCDKCNICVHQACYGILKVPEGSWLCRTCALG) form a PHD-type 1 zinc finger. The C2HC pre-PHD-type zinc-finger motif lies at 252-286 (QPKCLLCPKKGGAMKPTRSGTKWVHVSCALWIPEV). A PHD-type 2 zinc finger spans residues 310 to 366 (LLCSLCNEKVGACIQCSIKNCRTAFHVTCAFDHGLEMKTILTQEDEVKFKSYCPKHG). Disordered stretches follow at residues 622-705 (TVAK…SSSL) and 769-810 (RTKE…SSSS). Basic and acidic residues-rich tracts occupy residues 646–661 (SRTQGDTKFDSKEKPL) and 669–682 (KHTEPPERPAEKKR). Polar residues predominate over residues 692 to 705 (ATASSNKKQCSSSL).

This sequence belongs to the JADE family. In terms of assembly, component of the HBO1 complex composed.

The protein resides in the nucleus. It localises to the chromosome. Its subcellular location is the cytoplasm. It is found in the cytoskeleton. The protein localises to the cilium basal body. Functionally, scaffold subunit of some HBO1 complexes, which have a histone H4 acetyltransferase activity. Plays a key role in HBO1 complex by directing KAT7/HBO1 specificity towards histone H4 acetylation (H4K5ac, H4K8ac and H4K12ac), regulating DNA replication initiation, regulating DNA replication initiation. The chain is Protein Jade-1 (jade1) from Xenopus laevis (African clawed frog).